The sequence spans 305 residues: Glycine--tRNA ligase alpha subunit (305 aa).

The protein belongs to the class-II aminoacyl-tRNA synthetase family. In terms of assembly, tetramer of two alpha and two beta subunits.

The protein resides in the cytoplasm. The catalysed reaction is tRNA(Gly) + glycine + ATP = glycyl-tRNA(Gly) + AMP + diphosphate. The protein is Glycine--tRNA ligase alpha subunit of Streptococcus pneumoniae (strain ATCC BAA-255 / R6).